Reading from the N-terminus, the 489-residue chain is Cytochrome P450 monooxygenase tazI (489 aa).

Cys-433 is a binding site for heme.

The protein belongs to the cytochrome P450 family. Requires heme as cofactor.

It participates in secondary metabolite biosynthesis. In terms of biological role, cytochrome P450 monooxygenase; part of the gene cluster that mediates the biosynthesis of azaterrilone A and other azaphilones, a class of fungal metabolites characterized by a highly oxygenated pyrano-quinone bicyclic core and exhibiting a broad range of bioactivities. The first step of the pathway begins with the non-reducing polyketide synthase tazA that assembles one acetyl-CoA starter unit, five malonyl-CoA units, and catalyzes a series of Claisen condensations, methylation, PT-mediated cyclization, and finally releases the first hexaketide precursor through the R-domain. The tazA product then undergoes reduction on its terminal ketone and the following pyran-ring formation by yet undetermined enzyme(s). Dehydration and enoyl reduction, possibly involving the trans-enoyl reductase tazE leads to the next intermediate. TazD is predicted as an acetyltransferase and might catalyze the acetylation steps leading to the synthesis of azaterrilone A. Azaterrilone A is not the final product of the taz pathway and both the highly reducing polyketide synthase tazB and the dual enzyme tazHJ catalyze late steps of the pathway, leading to the production of the 2 final stereoisomers that contain additional polyketide modification whose structures have still to be determined. In Aspergillus terreus (strain NIH 2624 / FGSC A1156), this protein is Cytochrome P450 monooxygenase tazI.